The sequence spans 111 residues: MSDTLTRLAAVLEERRNAAPDSSYVASLYHKGLNKILEKVGEESVETIIAAKDAAASGDCQELIYETADLWFHSLVMLSALGQHPQAVLDELERRFGLSGHAEKAARQPSA.

This sequence belongs to the PRA-PH family.

The protein localises to the cytoplasm. The catalysed reaction is 1-(5-phospho-beta-D-ribosyl)-ATP + H2O = 1-(5-phospho-beta-D-ribosyl)-5'-AMP + diphosphate + H(+). The protein operates within amino-acid biosynthesis; L-histidine biosynthesis; L-histidine from 5-phospho-alpha-D-ribose 1-diphosphate: step 2/9. This is Phosphoribosyl-ATP pyrophosphatase from Pseudomonas paraeruginosa (strain DSM 24068 / PA7) (Pseudomonas aeruginosa (strain PA7)).